The sequence spans 355 residues: UDP-N-acetylglucosamine--N-acetylmuramyl-(pentapeptide) pyrophosphoryl-undecaprenol N-acetylglucosamine transferase (355 aa).

UDP-N-acetyl-alpha-D-glucosamine is bound by residues Thr-15 to Gly-17, Asn-127, Arg-163, Ser-191, Ile-245, Ala-264 to Glu-269, and Gln-289.

This sequence belongs to the glycosyltransferase 28 family. MurG subfamily.

The protein resides in the cell inner membrane. The enzyme catalyses di-trans,octa-cis-undecaprenyl diphospho-N-acetyl-alpha-D-muramoyl-L-alanyl-D-glutamyl-meso-2,6-diaminopimeloyl-D-alanyl-D-alanine + UDP-N-acetyl-alpha-D-glucosamine = di-trans,octa-cis-undecaprenyl diphospho-[N-acetyl-alpha-D-glucosaminyl-(1-&gt;4)]-N-acetyl-alpha-D-muramoyl-L-alanyl-D-glutamyl-meso-2,6-diaminopimeloyl-D-alanyl-D-alanine + UDP + H(+). Its pathway is cell wall biogenesis; peptidoglycan biosynthesis. Functionally, cell wall formation. Catalyzes the transfer of a GlcNAc subunit on undecaprenyl-pyrophosphoryl-MurNAc-pentapeptide (lipid intermediate I) to form undecaprenyl-pyrophosphoryl-MurNAc-(pentapeptide)GlcNAc (lipid intermediate II). The sequence is that of UDP-N-acetylglucosamine--N-acetylmuramyl-(pentapeptide) pyrophosphoryl-undecaprenol N-acetylglucosamine transferase from Yersinia enterocolitica serotype O:8 / biotype 1B (strain NCTC 13174 / 8081).